The following is a 604-amino-acid chain: Glucoamylase 1 (604 aa).

Residues 1–25 (MQLFNLPLKVSFFLVLSYFSLLVSA) form the signal peptide. An adsorption to raw starch region spans residues 26–115 (ASIPSSASVQ…EFYIKYEVSG (90 aa)). In terms of domain architecture, CBM21 spans 26 to 130 (ASIPSSASVQ…NNNSANYQVS (105 aa)). The segment at 116-604 (KTYYDNNNSA…SYAKAGAPAA (489 aa)) is starch degradation. Asparagine 122 carries N-linked (GlcNAc...) asparagine glycosylation. Residues 127–164 (YQVSTSKPTTTTATATTTTAPSTSTTTPPSRSEPATFP) are disordered. Over residues 130–162 (STSKPTTTTATATTTTAPSTSTTTPPSRSEPAT) the composition is skewed to low complexity. Residues asparagine 167, asparagine 230, and asparagine 236 are each glycosylated (N-linked (GlcNAc...) asparagine). Tryptophan 279 is a substrate binding site. The active-site Proton acceptor is aspartate 336. Glutamate 339 serves as the catalytic Proton donor. N-linked (GlcNAc...) asparagine glycosylation occurs at asparagine 564.

This sequence belongs to the glycosyl hydrolase 15 family.

The catalysed reaction is Hydrolysis of terminal (1-&gt;4)-linked alpha-D-glucose residues successively from non-reducing ends of the chains with release of beta-D-glucose.. The sequence is that of Glucoamylase 1 from Rhizopus oryzae (Mucormycosis agent).